The primary structure comprises 294 residues: Keratin-like protein KRT222 (294 aa).

Residues 1-150 enclose the IF rod domain; sequence MELSQLLNEI…RLLEQEEIRY (150 aa). Residues 1 to 151 adopt a coiled-coil conformation; sequence MELSQLLNEI…LLEQEEIRYY (151 aa).

Belongs to the intermediate filament family.

The chain is Keratin-like protein KRT222 (Krt222) from Mus musculus (Mouse).